A 231-amino-acid polypeptide reads, in one-letter code: Putative carboxymethylenebutenolidase (231 aa).

Catalysis depends on residues cysteine 118, aspartate 167, and histidine 199.

Belongs to the dienelactone hydrolase family.

The enzyme catalyses 2-(5-oxo-2,5-dihydrofuran-2-ylidene)acetate + H2O = 4-oxohex-2-enedioate + H(+). In Aquifex aeolicus (strain VF5), this protein is Putative carboxymethylenebutenolidase.